Consider the following 345-residue polypeptide: Ferrochelatase (345 aa).

Positions 215 and 296 each coordinate Fe cation.

The protein belongs to the ferrochelatase family.

The protein localises to the cytoplasm. The catalysed reaction is heme b + 2 H(+) = protoporphyrin IX + Fe(2+). It functions in the pathway porphyrin-containing compound metabolism; protoheme biosynthesis; protoheme from protoporphyrin-IX: step 1/1. Functionally, catalyzes the ferrous insertion into protoporphyrin IX. The sequence is that of Ferrochelatase from Rhodopseudomonas palustris (strain ATCC BAA-98 / CGA009).